The primary structure comprises 762 residues: Pyrophosphate-energized vacuolar membrane proton pump (762 aa).

Residues 1 to 6 (MAILGE) lie on the Intravacuolar side of the membrane. The helical transmembrane segment at 7 to 33 (LGTEILIPVCGVIGIVFAVAQWFIVSK) threads the bilayer. The Cytoplasmic portion of the chain corresponds to 34-81 (VKVTPGAASAAAGAKNGYGDYLIEEEEGLNDHNVVVKCAEIQTAISEG). A helical transmembrane segment spans residues 82–111 (ATSFLFTMYQYVGMFMVVFAAIIFLFLGSI). Residues 112–131 (EGFSTKGQPCTYSKGTCKPA) lie on the Intravacuolar side of the membrane. A disulfide bridge links C121 with C128. A helical membrane pass occupies residues 132–159 (LYTALFSTASFLLGAITSLVSGFLGMKI). The Cytoplasmic portion of the chain corresponds to 160-182 (ATYANARTTLEARKGVGKAFITA). A helical membrane pass occupies residues 183 to 212 (FRSGAVMGFLLSSSGLVVLYITINVFKMYY). Residues 213–215 (GDD) are Intravacuolar-facing. A helical membrane pass occupies residues 216–244 (WEGLFESITGYGLGGSSMALFGRVGGGIY). The Cytoplasmic portion of the chain corresponds to 245–282 (TKAADVGADLVGKVERNIPEDDPRNPAVIADNVGDNVG). K246 is a binding site for substrate. D249, D253, and D279 together coordinate Mg(2+). A helical membrane pass occupies residues 283-308 (DIAGMGSDLFGSYAESSCAALVVASI). The Intravacuolar portion of the chain corresponds to 309–316 (SSFGINHD). The chain crosses the membrane as a helical span at residues 317–342 (FTAMCYPLLVSSVGIIVCLLTTLFAT). The Cytoplasmic portion of the chain corresponds to 343-350 (DFFEIKAA). A helical membrane pass occupies residues 351–378 (NEIEPALKKQLIISTALMTVGVAVISWL). Topologically, residues 379 to 397 (ALPAKFTIFNFGAQKEVSN) are intravacuolar. A helical membrane pass occupies residues 398 to 421 (WGLFFCVAVGLWAGLIIGFVTEYY). Topologically, residues 422-443 (TSNAYSPVQDVADSCRTGAATN) are cytoplasmic. A helical membrane pass occupies residues 444-468 (VIFGLALGYKSVIIPIFAIAVSIYV). Residues 469–474 (SFSIAA) lie on the Intravacuolar side of the membrane. A helical transmembrane segment spans residues 475 to 501 (MYGIAMAALGMLSTMATGLAIDAYGPI). Residues 502–530 (SDNAGGIAEMAGMSHRIRERTDALDAAGN) are Cytoplasmic-facing. 2 residues coordinate Mg(2+): D503 and N530. The helical transmembrane segment at 531–559 (TTAAIGKGFAIGSAALVSLALFGAFVSRA) threads the bilayer. The Intravacuolar portion of the chain corresponds to 560-569 (GVKVVDVLSP). The helical transmembrane segment at 570–598 (KVFIGLIVGAMLPYWFSAMTMKSVGSAAL) threads the bilayer. Residues 599-627 (KMVEEVRRQFNTIPGLMEGTAKPDYATCV) are Cytoplasmic-facing. A helical membrane pass occupies residues 628–656 (KISTDASIKEMIPPGALVMLTPLIVGTLF). G657 is a topological domain (intravacuolar). A helical transmembrane segment spans residues 658–685 (VETLSGVLAGALVSGVQIAISASNTGGA). At 686 to 728 (WDNAKKYIEAGNSEHARSLGPKGSDCHKAAVIGDTIGDPLKDT) the chain is on the cytoplasmic side. Residues D687 and D723 each coordinate Mg(2+). K726 is a substrate binding site. A helical membrane pass occupies residues 729 to 754 (SGPSLNILIKLMAVESLVFAPFFATY). Residues 755-762 (GGLLFKYI) lie on the Intravacuolar side of the membrane.

It belongs to the H(+)-translocating pyrophosphatase (TC 3.A.10) family. K(+)-stimulated subfamily. Monomer.

Its subcellular location is the vacuole membrane. The catalysed reaction is diphosphate + H2O + H(+)(in) = 2 phosphate + 2 H(+)(out). In terms of biological role, contributes to the transtonoplast (from cytosol to vacuole lumen) H(+)-electrochemical potential difference. It establishes a proton gradient of similar and often greater magnitude than the H(+)-ATPase on the same membrane. This chain is Pyrophosphate-energized vacuolar membrane proton pump, found in Hordeum vulgare (Barley).